A 148-amino-acid polypeptide reads, in one-letter code: Ubiquitin-conjugating enzyme E2 11 (148 aa).

The UBC core domain maps to 1–147 (MASKRILKEL…ARSWTQKYAM (147 aa)). Cys-85 acts as the Glycyl thioester intermediate in catalysis.

This sequence belongs to the ubiquitin-conjugating enzyme family. In terms of assembly, interacts with the E3 ubiquitin-protein ligases MBR1 and MBR2. In terms of tissue distribution, ubiquitously expressed. Mainly in petals.

The catalysed reaction is S-ubiquitinyl-[E1 ubiquitin-activating enzyme]-L-cysteine + [E2 ubiquitin-conjugating enzyme]-L-cysteine = [E1 ubiquitin-activating enzyme]-L-cysteine + S-ubiquitinyl-[E2 ubiquitin-conjugating enzyme]-L-cysteine.. Its pathway is protein modification; protein ubiquitination. Its function is as follows. Accepts the ubiquitin from the E1 complex and catalyzes its covalent attachment to other proteins. Mediates the selective degradation of short-lived and abnormal proteins. The polypeptide is Ubiquitin-conjugating enzyme E2 11 (UBC11) (Arabidopsis thaliana (Mouse-ear cress)).